The sequence spans 324 residues: Endochitinase 1 (324 aa).

An N-terminal signal peptide occupies residues 1-22 (MSFLQALSIFLLLLLYVVVGSA). One can recognise a Chitin-binding type-1 domain in the interval 23–64 (EQCGRQAGGALCPGGLCCSQFGWCGSTADYCTVPGCQSQCSG). Cystine bridges form between Cys25-Cys40, Cys34-Cys46, Cys39-Cys53, Cys58-Cys62, Cys95-Cys158, Cys170-Cys178, and Cys277-Cys309. The active-site Proton donor is Glu139. Positions 318–324 (GVSVDSM) are cleaved as a propeptide — removed in mature form.

Belongs to the glycosyl hydrolase 19 family. Chitinase class I subfamily.

It carries out the reaction Random endo-hydrolysis of N-acetyl-beta-D-glucosaminide (1-&gt;4)-beta-linkages in chitin and chitodextrins.. Functionally, defense against chitin-containing fungal pathogens. This chain is Endochitinase 1, found in Gossypium hirsutum (Upland cotton).